The following is a 342-amino-acid chain: Holliday junction branch migration complex subunit RuvB (342 aa).

Positions 1-179 are large ATPase domain (RuvB-L); the sequence is MTNILSPEKS…FGIPMRLNFY (179 aa). ATP-binding positions include Ile-18, Arg-19, Gly-60, Lys-63, Thr-64, Thr-65, 126–128, Arg-169, Tyr-179, and Arg-216; that span reads EDF. Thr-64 is a Mg(2+) binding site. Positions 180–250 are small ATPAse domain (RuvB-S); it reads NTEELKKVLN…ISDFGLNRLE (71 aa). The segment at 253 to 342 is head domain (RuvB-H); sequence CIGLDSNDYR…HQFNIFNENE (90 aa). Residues Arg-289, Arg-308, and Arg-313 each contribute to the DNA site.

Belongs to the RuvB family. As to quaternary structure, homohexamer. Forms an RuvA(8)-RuvB(12)-Holliday junction (HJ) complex. HJ DNA is sandwiched between 2 RuvA tetramers; dsDNA enters through RuvA and exits via RuvB. An RuvB hexamer assembles on each DNA strand where it exits the tetramer. Each RuvB hexamer is contacted by two RuvA subunits (via domain III) on 2 adjacent RuvB subunits; this complex drives branch migration. In the full resolvosome a probable DNA-RuvA(4)-RuvB(12)-RuvC(2) complex forms which resolves the HJ.

The protein localises to the cytoplasm. The catalysed reaction is ATP + H2O = ADP + phosphate + H(+). Functionally, the RuvA-RuvB-RuvC complex processes Holliday junction (HJ) DNA during genetic recombination and DNA repair, while the RuvA-RuvB complex plays an important role in the rescue of blocked DNA replication forks via replication fork reversal (RFR). RuvA specifically binds to HJ cruciform DNA, conferring on it an open structure. The RuvB hexamer acts as an ATP-dependent pump, pulling dsDNA into and through the RuvAB complex. RuvB forms 2 homohexamers on either side of HJ DNA bound by 1 or 2 RuvA tetramers; 4 subunits per hexamer contact DNA at a time. Coordinated motions by a converter formed by DNA-disengaged RuvB subunits stimulates ATP hydrolysis and nucleotide exchange. Immobilization of the converter enables RuvB to convert the ATP-contained energy into a lever motion, pulling 2 nucleotides of DNA out of the RuvA tetramer per ATP hydrolyzed, thus driving DNA branch migration. The RuvB motors rotate together with the DNA substrate, which together with the progressing nucleotide cycle form the mechanistic basis for DNA recombination by continuous HJ branch migration. Branch migration allows RuvC to scan DNA until it finds its consensus sequence, where it cleaves and resolves cruciform DNA. In Rickettsia africae (strain ESF-5), this protein is Holliday junction branch migration complex subunit RuvB.